We begin with the raw amino-acid sequence, 365 residues long: PHD finger protein 6 (365 aa).

Serine 2 is subject to N-acetylserine. Short sequence motifs (nuclear localization signal) lie at residues 13–16 (RQRK) and 129–133 (RKHKK). The C2HC pre-PHD-type 1 zinc finger occupies 14–52 (QRKCGFCKSNRDKECGQLLISENQKVAAHHKCMLFSSAL). The interval 14-132 (QRKCGFCKSN…IYMVYCRKHK (119 aa)) is extended PHD1 domain (ePHD1). The segment at 80 to 132 (LMCSLCHCPGATIGCDVKTCHRTYHYHCALHDKAQIREKPSQGIYMVYCRKHK) adopts a PHD-type 1 zinc-finger fold. 3 positions are modified to phosphoserine: serine 138, serine 145, and serine 155. The segment at 139–211 (EADLEESFNE…RSSPSDTRPK (73 aa)) is disordered. Residues 157 to 169 (KSKKKSRKGRPRK) carry the Nucleolar localization signal motif. Residues 157–171 (KSKKKSRKGRPRKTN) are compositionally biased toward basic residues. Lysine 173 participates in a covalent cross-link: Glycyl lysine isopeptide (Lys-Gly) (interchain with G-Cter in SUMO2). Phosphoserine is present on residues serine 183 and serine 199. The C2HC pre-PHD-type 2 zinc finger occupies 209 to 249 (RPKCGFCHVGEEENEARGKLHIFNAKKAAAHYKCMLFSSGT). The extended PHD2 domain (ePHD2) stretch occupies residues 209-330 (RPKCGFCHVG…IYKLYCKNHS (122 aa)). Lysine 227 is covalently cross-linked (Glycyl lysine isopeptide (Lys-Gly) (interchain with G-Cter in SUMO2)). The PHD-type 2 zinc-finger motif lies at 278-330 (MKCTLCSQPGATIGCEIKACVKTYHYHCGVQDKAKYIENMSRGIYKLYCKNHS). The segment at 330–365 (SGNDERDEEDEERESKSRGKVEIDQQQLTQQQLNGN) is disordered. Residues 342–352 (RESKSRGKVEI) are compositionally biased toward basic and acidic residues. Positions 354–365 (QQQLTQQQLNGN) are enriched in low complexity. Phosphothreonine is present on threonine 358.

As to quaternary structure, interacts with UBTF. Interacts with the NuRD complex component RBBP4 (via the nucleolar localization motif), the interaction mediates transcriptional repression activity.

It is found in the nucleus. Its subcellular location is the nucleolus. It localises to the chromosome. The protein localises to the centromere. The protein resides in the kinetochore. Functionally, transcriptional regulator that associates with ribosomal RNA promoters and suppresses ribosomal RNA (rRNA) transcription. The polypeptide is PHD finger protein 6 (PHF6) (Pongo abelii (Sumatran orangutan)).